The following is a 226-amino-acid chain: Octanoyltransferase (226 aa).

The BPL/LPL catalytic domain maps to 31-226; it reads PETPDALWIC…SQKLGTYLAP (196 aa). Substrate-binding positions include 70–77, 159–161, and 172–174; these read RGGQVTFH, ALG, and GVA. The active-site Acyl-thioester intermediate is C190.

This sequence belongs to the LipB family.

It is found in the cytoplasm. It carries out the reaction octanoyl-[ACP] + L-lysyl-[protein] = N(6)-octanoyl-L-lysyl-[protein] + holo-[ACP] + H(+). It functions in the pathway protein modification; protein lipoylation via endogenous pathway; protein N(6)-(lipoyl)lysine from octanoyl-[acyl-carrier-protein]: step 1/2. Its function is as follows. Catalyzes the transfer of endogenously produced octanoic acid from octanoyl-acyl-carrier-protein onto the lipoyl domains of lipoate-dependent enzymes. Lipoyl-ACP can also act as a substrate although octanoyl-ACP is likely to be the physiological substrate. This is Octanoyltransferase from Variovorax paradoxus (strain S110).